The primary structure comprises 477 residues: Tripartite motif-containing protein 72 (477 aa).

Zn(2+)-binding residues include Cys-14, Cys-17, Cys-29, His-31, Cys-34, Cys-37, Cys-53, Cys-56, Cys-86, His-89, Cys-97, Asp-100, Cys-105, Cys-108, His-114, and His-117. An RING-type zinc finger spans residues 14–57; the sequence is CPLCLQLFDAPVTAECGHSFCRACLIRVAGEPADDGTVACPCCQ. The B box-type zinc finger occupies 81-122; the sequence is VPQGHCEEHLDPLSIYCEQDRTLVCGVCASLGSHRGHRLLPA. A coiled-coil region spans residues 135–232; sequence QQKAQLQEAC…EKVLEEVADK (98 aa). Cys-144 is subject to S-nitrosocysteine. Ser-255 is modified (phosphoserine). A B30.2/SPRY domain is found at 271–475; it reads DFKFQVWKKM…PLLLVGPDSE (205 aa).

This sequence belongs to the TRIM/RBCC family. As to quaternary structure, homodimer. Homooligomer; disulfide-linked. Oligomerizes on the phospholipid membrane. Interacts with DYSF and CAV3. In terms of processing, disulfide bond formation at Cys-242 occurs in case of membrane damage that cause the entry of the oxidized milieu of the extracellular space, resulting in homooligomerization. S-nitrosylation at Cys-144 stabilizes TRIM72 and protects against oxidation-induced protein degradation and cell death.

Its subcellular location is the cell membrane. It is found in the sarcolemma. The protein localises to the cytoplasmic vesicle membrane. The catalysed reaction is S-ubiquitinyl-[E2 ubiquitin-conjugating enzyme]-L-cysteine + [acceptor protein]-L-lysine = [E2 ubiquitin-conjugating enzyme]-L-cysteine + N(6)-ubiquitinyl-[acceptor protein]-L-lysine.. It functions in the pathway protein modification; protein ubiquitination. Its activity is regulated as follows. Specifically binds phosphatidylserine. The binding to phospholipids enhances ubiquitination activity. Muscle-specific E3 ubiquitin-protein ligase that plays a central role in cell membrane repair by nucleating the assembly of the repair machinery at injury sites. Its ubiquitination activity is mediated by E2 ubiquitin-conjugating enzymes UBE2D1, UBE2D2 and UBE2D3. Acts as a sensor of oxidation: upon membrane damage, entry of extracellular oxidative environment results in disulfide bond formation and homooligomerization at the injury site. This oligomerization acts as a nucleation site for recruitment of TRIM72-containing vesicles to the injury site, leading to membrane patch formation. Probably acts upstream of the Ca(2+)-dependent membrane resealing process. Required for transport of DYSF to sites of cell injury during repair patch formation. Regulates membrane budding and exocytosis. May be involved in the regulation of the mobility of KCNB1-containing endocytic vesicles. This Rattus norvegicus (Rat) protein is Tripartite motif-containing protein 72.